Here is a 232-residue protein sequence, read N- to C-terminus: 7-cyano-7-deazaguanine synthase (232 aa).

Residue 8-18 (FSGGQDSTTCL) participates in ATP binding. C187, C196, C199, and C202 together coordinate Zn(2+).

Belongs to the QueC family. Requires Zn(2+) as cofactor.

It catalyses the reaction 7-carboxy-7-deazaguanine + NH4(+) + ATP = 7-cyano-7-deazaguanine + ADP + phosphate + H2O + H(+). The protein operates within purine metabolism; 7-cyano-7-deazaguanine biosynthesis. Catalyzes the ATP-dependent conversion of 7-carboxy-7-deazaguanine (CDG) to 7-cyano-7-deazaguanine (preQ(0)). This chain is 7-cyano-7-deazaguanine synthase, found in Vibrio campbellii (strain ATCC BAA-1116).